Reading from the N-terminus, the 1674-residue chain is Kinesin-like protein KIF14 (1674 aa).

Positions M1–N391 are required for PRC1-binding. Disordered stretches follow at residues E132–N158 and K171–N374. Polar residues-rich tracts occupy residues G142 to R151 and S202 to A214. S257 carries the phosphoserine modification. T262 is subject to Phosphothreonine. Basic and acidic residues predominate over residues V267–P279. Polar residues predominate over residues T302–R311. The segment covering V317 to P329 has biased composition (basic and acidic residues). The interval N391–D772 is required for microtubule-binding with high affinity. One can recognise a Kinesin motor domain in the interval Q393 to I736. G482–S489 serves as a coordination point for ATP. A coiled-coil region spans residues N743 to G826. An FHA domain is found at T860–I911. Residues P936–V1674 form a required for CIT-binding region. Residues E961–N1110 are a coiled coil. Phosphoserine is present on residues S973 and S1326. The interval G1618 to V1674 is disordered. Over residues S1630 to C1642 the composition is skewed to basic and acidic residues. Over residues A1660–V1674 the composition is skewed to polar residues.

This sequence belongs to the TRAFAC class myosin-kinesin ATPase superfamily. Kinesin family. In terms of assembly, directly interacts with PRC1 within a complex also containing KIF4A, KIF20A and KIF23; targets to the central spindle. Directly interacts with CIT depending on the activation state of the kinase (stronger interaction with the kinase-dead form); targets to the midbody. Interacts with ARRB2; the interaction is detected in the nucleus upon OR1D2 stimulation. Interacts with AKT1; the interaction is detected in the plasma membrane upon INS stimulation and promotes AKT1 phosphorylation. Interacts with SVIL; at midbody during cytokinesis. Interacts with RADIL (via PDZ domain); recruits RADIL to the microtubule network restricting RADIL from interaction with activated RAP1A.

It localises to the nucleus. The protein localises to the cytoplasm. The protein resides in the cytoskeleton. Its subcellular location is the spindle. It is found in the midbody. In terms of biological role, microtubule motor protein that binds to microtubules with high affinity through each tubulin heterodimer and has an ATPase activity. Plays a role in many processes like cell division, cytokinesis and also in cell proliferation and apoptosis. During cytokinesis, targets to central spindle and midbody through its interaction with PRC1 and CIT respectively. Regulates cell growth through regulation of cell cycle progression and cytokinesis. During cell cycle progression acts through SCF-dependent proteasomal ubiquitin-dependent protein catabolic process which controls CDKN1B degradation, resulting in positive regulation of cyclins, including CCNE1, CCND1 and CCNB1. During late neurogenesis, regulates the cerebellar and cerebral cortex development and olfactory bulb development through regulation of apoptosis, cell proliferation and cell division. Also is required for chromosome congression and alignment during mitotic cell cycle process. Regulates cell spreading, focal adhesion dynamics, and cell migration through its interaction with RADIL resulting in regulation of RAP1A-mediated inside-out integrin activation by tethering RADIL on microtubules. This chain is Kinesin-like protein KIF14, found in Mus musculus (Mouse).